The chain runs to 116 residues: Iron-sulfur cluster insertion protein ErpA (116 aa).

Iron-sulfur cluster-binding residues include C44, C108, and C110.

Belongs to the HesB/IscA family. In terms of assembly, homodimer. Requires iron-sulfur cluster as cofactor.

Its function is as follows. Required for insertion of 4Fe-4S clusters for at least IspG. The chain is Iron-sulfur cluster insertion protein ErpA from Idiomarina loihiensis (strain ATCC BAA-735 / DSM 15497 / L2-TR).